The primary structure comprises 226 residues: Putative N-acetylmannosamine-6-phosphate 2-epimerase (226 aa).

This sequence belongs to the NanE family.

It catalyses the reaction an N-acyl-D-glucosamine 6-phosphate = an N-acyl-D-mannosamine 6-phosphate. It functions in the pathway amino-sugar metabolism; N-acetylneuraminate degradation; D-fructose 6-phosphate from N-acetylneuraminate: step 3/5. In terms of biological role, converts N-acetylmannosamine-6-phosphate (ManNAc-6-P) to N-acetylglucosamine-6-phosphate (GlcNAc-6-P). The protein is Putative N-acetylmannosamine-6-phosphate 2-epimerase of Mycoplasma mycoides subsp. mycoides SC (strain CCUG 32753 / NCTC 10114 / PG1).